The sequence spans 240 residues: Bidirectional sugar transporter SWEET7c (240 aa).

The Extracellular portion of the chain corresponds to 1 to 12 (MVSPDLIRNVVG). Positions 10–48 (VVGIVGNVISFGLFLSPVPIFWWIIKNKNVQNFKADPIL) constitute a MtN3/slv 1 domain. Residues 13–33 (IVGNVISFGLFLSPVPIFWWI) traverse the membrane as a helical segment. Topologically, residues 34–46 (IKNKNVQNFKADP) are cytoplasmic. The helical transmembrane segment at 47-67 (ILVVTINGISLVIEAVYLTIF) threads the bilayer. Topologically, residues 68-78 (FLFSDKKNKKK) are extracellular. The helical transmembrane segment at 79–99 (MGVVLATEALFMAAVAVGVLL) threads the bilayer. Topologically, residues 100 to 108 (GAHTHQRRS) are cytoplasmic. The chain crosses the membrane as a helical span at residues 109–129 (LIVGILCVIFGTIMYSSPLTI). The region spanning 110 to 191 (IVGILCVIFG…LILYAIYYRT (82 aa)) is the MtN3/slv 2 domain. Topologically, residues 130-140 (MVVKTKSVEYM) are extracellular. A helical membrane pass occupies residues 141–161 (PLLLSVVSFLNGLCWTLYALI). Residues 162-164 (RFD) lie on the Cytoplasmic side of the membrane. The helical transmembrane segment at 165-185 (IFITIPNGLGVLFAIMQLILY) threads the bilayer. Topologically, residues 186-240 (AIYYRTTPKKQDKNLELPTVAPIAKDTSIVAPVGNDDDVNGSTASHATINITIEP) are extracellular. N-linked (GlcNAc...) asparagine glycosylation is found at asparagine 225 and asparagine 235.

Belongs to the SWEET sugar transporter family. Forms homooligomers and/or heterooligomers.

It localises to the cell membrane. Its function is as follows. Mediates both low-affinity uptake and efflux of sugar across the plasma membrane. The polypeptide is Bidirectional sugar transporter SWEET7c (SWEET7C) (Oryza sativa subsp. indica (Rice)).